A 159-amino-acid polypeptide reads, in one-letter code: Cyclic pyranopterin monophosphate synthase (159 aa).

Residues 75-77 (LCH) and 113-114 (ME) contribute to the substrate site. Aspartate 128 is a catalytic residue.

This sequence belongs to the MoaC family. As to quaternary structure, homohexamer; trimer of dimers.

The enzyme catalyses (8S)-3',8-cyclo-7,8-dihydroguanosine 5'-triphosphate = cyclic pyranopterin phosphate + diphosphate. It participates in cofactor biosynthesis; molybdopterin biosynthesis. Its function is as follows. Catalyzes the conversion of (8S)-3',8-cyclo-7,8-dihydroguanosine 5'-triphosphate to cyclic pyranopterin monophosphate (cPMP). The sequence is that of Cyclic pyranopterin monophosphate synthase from Yersinia pseudotuberculosis serotype O:3 (strain YPIII).